The primary structure comprises 295 residues: Craniofacial development protein 1 (295 aa).

Composition is skewed to acidic residues over residues 1 to 18 (MEEF…DEDY) and 25 to 43 (YSED…DGEE). 2 disordered regions span residues 1-155 (MEEF…KPKE) and 188-219 (FLKQ…RTSG). Basic residues predominate over residues 49-65 (KGKRRKAQSIPARKRKQ). Positions 70 to 93 (LDEEEDGEEDSGGSSREEDEEEQE) are enriched in acidic residues. A phosphoserine mark is found at Ser-80, Ser-83, Ser-84, and Ser-112. The span at 120 to 130 (KSKAASSSQVK) shows a compositional bias: low complexity. Basic and acidic residues-rich tracts occupy residues 145–155 (VKADELEKPKE) and 188–197 (FLKQTEKEKP). Lys-146 participates in a covalent cross-link: Glycyl lysine isopeptide (Lys-Gly) (interchain with G-Cter in SUMO2). Residues 174-213 (VTKEVDATSKEAKSFLKQTEKEKPQALVTSAATPPPAGSG) form a hydrophilic region. Phosphoserine is present on Ser-212. Positions 214 to 295 (IKRTSGMSSL…RDLRLSKMKP (82 aa)) constitute a BCNT-C domain. At Lys-215 the chain carries N6-methyllysine. Position 246 is a phosphoserine (Ser-246).

Its subcellular location is the chromosome. The protein localises to the centromere. The protein resides in the kinetochore. Its function is as follows. May play a role during embryogenesis. The protein is Craniofacial development protein 1 (Cfdp1) of Rattus norvegicus (Rat).